The chain runs to 87 residues: Putative BTB/POZ domain-containing protein At3g29740 (87 aa).

The BTB domain maps to 24-87 (VDVRLKAGDS…KHTELVALVE (64 aa)).

Its pathway is protein modification; protein ubiquitination. Functionally, may act as a substrate-specific adapter of an E3 ubiquitin-protein ligase complex (CUL3-RBX1-BTB) which mediates the ubiquitination and subsequent proteasomal degradation of target proteins. This is Putative BTB/POZ domain-containing protein At3g29740 from Arabidopsis thaliana (Mouse-ear cress).